Reading from the N-terminus, the 302-residue chain is MCSDKNITATALVRPSWLRVKAPFSDEYQSTNELIKSLKLNTVCKEAACPNIGECWSKKHATVMILGSICTRACAFCNVSTGKPEQVDEYEPYRLSEAVMKLGLKHVVITSVDRDDLSDGGASHFAKCITYIRERSPTTSIEVLTPDFLRKHEAWKIVAKARPDVYNHNIETVPSLYLKVRPGARYYNSLNLLHQVKIFDSSIFTKSGIMVGLGETKHEVLQVMDDLRAAEVDFLTIGQYLRPSARHIDVGRYVTPDEFDYYAKVARSKGFLMVSASPLTRSSYHAGEHFEKLKQMRLQNII.

The [4Fe-4S] cluster site is built by C44, C49, C55, C70, C74, C77, and S283. The Radical SAM core domain maps to 56–272 (WSKKHATVMI…AKVARSKGFL (217 aa)).

This sequence belongs to the radical SAM superfamily. Lipoyl synthase family. It depends on [4Fe-4S] cluster as a cofactor.

It is found in the cytoplasm. It catalyses the reaction [[Fe-S] cluster scaffold protein carrying a second [4Fe-4S](2+) cluster] + N(6)-octanoyl-L-lysyl-[protein] + 2 oxidized [2Fe-2S]-[ferredoxin] + 2 S-adenosyl-L-methionine + 4 H(+) = [[Fe-S] cluster scaffold protein] + N(6)-[(R)-dihydrolipoyl]-L-lysyl-[protein] + 4 Fe(3+) + 2 hydrogen sulfide + 2 5'-deoxyadenosine + 2 L-methionine + 2 reduced [2Fe-2S]-[ferredoxin]. Its pathway is protein modification; protein lipoylation via endogenous pathway; protein N(6)-(lipoyl)lysine from octanoyl-[acyl-carrier-protein]: step 2/2. Its function is as follows. Catalyzes the radical-mediated insertion of two sulfur atoms into the C-6 and C-8 positions of the octanoyl moiety bound to the lipoyl domains of lipoate-dependent enzymes, thereby converting the octanoylated domains into lipoylated derivatives. The chain is Lipoyl synthase from Orientia tsutsugamushi (strain Boryong) (Rickettsia tsutsugamushi).